The following is a 213-amino-acid chain: Pyridoxine/pyridoxamine 5'-phosphate oxidase (213 aa).

FMN contacts are provided by residues 60–65 (RMVLMK), 75–76 (YS), K82, and Q104. Substrate is bound at residue K65. Positions 122 and 126 each coordinate substrate. Residues 139 to 140 (QS) and W184 each bind FMN. 190-192 (RLH) provides a ligand contact to substrate. R194 contacts FMN.

It belongs to the pyridoxamine 5'-phosphate oxidase family. Homodimer. Requires FMN as cofactor.

It carries out the reaction pyridoxamine 5'-phosphate + O2 + H2O = pyridoxal 5'-phosphate + H2O2 + NH4(+). The enzyme catalyses pyridoxine 5'-phosphate + O2 = pyridoxal 5'-phosphate + H2O2. It functions in the pathway cofactor metabolism; pyridoxal 5'-phosphate salvage; pyridoxal 5'-phosphate from pyridoxamine 5'-phosphate: step 1/1. It participates in cofactor metabolism; pyridoxal 5'-phosphate salvage; pyridoxal 5'-phosphate from pyridoxine 5'-phosphate: step 1/1. In terms of biological role, catalyzes the oxidation of either pyridoxine 5'-phosphate (PNP) or pyridoxamine 5'-phosphate (PMP) into pyridoxal 5'-phosphate (PLP). This Bradyrhizobium diazoefficiens (strain JCM 10833 / BCRC 13528 / IAM 13628 / NBRC 14792 / USDA 110) protein is Pyridoxine/pyridoxamine 5'-phosphate oxidase.